The sequence spans 530 residues: GH3 domain-containing protein (530 aa).

The first 17 residues, 1 to 17, serve as a signal peptide directing secretion; sequence MLLWPLLLLLLLLPTLA. The disordered stretch occupies residues 99–122; sequence LTKASQTQQEDSGEQPLPPTSNQD. Asn-450 carries an N-linked (GlcNAc...) asparagine glycan. The residue at position 489 (Gln-489) is an N5-methylglutamine.

It belongs to the GH3 family. Post-translationally, methylated at Gln-489 by N6AMT1.

It is found in the endoplasmic reticulum. The protein localises to the nucleus envelope. This is GH3 domain-containing protein (GHDC) from Homo sapiens (Human).